Reading from the N-terminus, the 232-residue chain is Eukaryotic translation initiation factor NCBP (232 aa).

Residues 1-11 (MEPAVERKVPE) are compositionally biased toward basic and acidic residues. A disordered region spans residues 1–49 (MEPAVERKVPEQEEQLQPSHARAEDAPPAAVEEEDEAEAEESERRNREL). Residues 31-41 (VEEEDEAEAEE) are compositionally biased toward acidic residues.

It belongs to the eukaryotic initiation factor 4E family. In terms of assembly, EIF4F is a multi-subunit complex, the composition of which varies with external and internal environmental conditions. It is composed of at least EIF4A, EIF4E and EIF4G. EIF4E is also known to interact with other partners. In higher plants two isoforms of EIF4F have been identified, named isoform EIF4F and isoform EIF(iso)4F. Isoform EIF4F has subunits p220 and p26, whereas isoform EIF(iso)4F has subunits p82 and p28.

Recognizes and binds the 7-methylguanosine-containing mRNA cap during an early step in the initiation of protein synthesis and facilitates ribosome binding by inducing the unwinding of the mRNAs secondary structures. This chain is Eukaryotic translation initiation factor NCBP (NCBP), found in Triticum aestivum (Wheat).